A 221-amino-acid polypeptide reads, in one-letter code: Eukaryotic translation initiation factor NCBP (221 aa).

It belongs to the eukaryotic initiation factor 4E family. EIF4F is a multi-subunit complex, the composition of which varies with external and internal environmental conditions. It is composed of at least EIF4A, EIF4E and EIF4G. EIF4E is also known to interact with other partners. In higher plants two isoforms of EIF4F have been identified, named isoform EIF4F and isoform EIF(iso)4F. Isoform EIF4F has subunits p220 and p26, whereas isoform EIF(iso)4F has subunits p82 and p28.

Its function is as follows. Recognizes and binds the 7-methylguanosine-containing mRNA cap during an early step in the initiation of protein synthesis and facilitates ribosome binding by inducing the unwinding of the mRNAs secondary structures. The protein is Eukaryotic translation initiation factor NCBP (NCBP) of Arabidopsis thaliana (Mouse-ear cress).